The primary structure comprises 595 residues: Probable carotenoid cleavage dioxygenase 4, chloroplastic (595 aa).

Residues 1–34 (MDSVSSSSFLSSTFSLHHSLLRRRSSSPTLLRIN) constitute a chloroplast transit peptide. The tract at residues 41–74 (RSPITNPSDNNDRRNKPKTLHNRTNHTLVSSPPK) is disordered. The segment covering 55 to 64 (NKPKTLHNRT) has biased composition (basic residues). Positions 287, 336, 404, and 583 each coordinate Fe cation.

Belongs to the carotenoid oxygenase family. As to quaternary structure, interacts with VAR3. Interacts with PGM48. Fe(2+) is required as a cofactor. In terms of tissue distribution, mostly expressed in flowers (e.g. sepals and petals), siliques, seeds, leaves and cotyledons.

It is found in the plastid. It localises to the chloroplast. The protein resides in the plastoglobule. May be involved in carotenoid cleavage. The protein is Probable carotenoid cleavage dioxygenase 4, chloroplastic (CCD4) of Arabidopsis thaliana (Mouse-ear cress).